Here is a 450-residue protein sequence, read N- to C-terminus: Solute carrier family 52, riboflavin transporter, member 2 (450 aa).

A run of 5 helical transmembrane segments spans residues 14-34, 47-67, 86-106, 112-132, and 147-167; these read LLVA…WVEL, LPSY…LVTL, GLGI…APVA, VAFL…NVTF, and FFLG…GQGV. An N-linked (GlcNAc...) asparagine glycan is attached at asparagine 178. A helical transmembrane segment spans residues 201-221; it reads FFWVLTALLGTSAAAFQGLLL. A compositionally biased stretch (low complexity) spans 227 to 236; the sequence is TSEPTTGTGL. The disordered stretch occupies residues 227–264; that stretch reads TSEPTTGTGLRVETPGTEEEEEEEEASPLQEPPGQVAG. Over residues 242 to 252 the composition is skewed to acidic residues; it reads GTEEEEEEEEA. 5 helical membrane passes run 282–302, 317–337, 344–364, 369–389, and 409–429; these read ACLL…LPAV, LAVV…MAVL, LCGL…LAAL, PLVG…LCAG, and ALLA…VAMF.

Belongs to the riboflavin transporter family.

It localises to the cell membrane. It carries out the reaction riboflavin(in) = riboflavin(out). With respect to regulation, riboflavin transport is Na(+)-independent but moderately pH-sensitive. Activity is strongly inhibited by riboflavin analogs, such as lumiflavin. Weakly inhibited by flavin adenine dinucleotide (FAD) and flavin mononucleotide (FMN). Its function is as follows. Plasma membrane transporter mediating the uptake by cells of the water soluble vitamin B2/riboflavin that plays a key role in biochemical oxidation-reduction reactions of the carbohydrate, lipid, and amino acid metabolism. May also act as a receptor for 4-hydroxybutyrate. The polypeptide is Solute carrier family 52, riboflavin transporter, member 2 (Slc52a2) (Mus musculus (Mouse)).